Here is a 138-residue protein sequence, read N- to C-terminus: Large ribosomal subunit protein eL32 (138 aa).

The protein belongs to the eukaryotic ribosomal protein eL32 family.

The chain is Large ribosomal subunit protein eL32 from Saccharolobus islandicus (strain Y.N.15.51 / Yellowstone #2) (Sulfolobus islandicus).